The sequence spans 358 residues: Protein FAM187B (358 aa).

The first 17 residues, 1 to 17 (MLATLWLVGLSLPMLWA), serve as a signal peptide directing secretion. Topologically, residues 18 to 322 (QRLISCPYKN…DKADSVLRRL (305 aa)) are extracellular. An N-linked (GlcNAc...) asparagine glycan is attached at Asn127. A helical transmembrane segment spans residues 323–343 (KLMVLSISVLAVGGLLCKVVF). At 344–358 (RPVCGKKRSQVLLVK) the chain is on the cytoplasmic side.

It belongs to the FAM187 family.

The protein localises to the membrane. The sequence is that of Protein FAM187B (Fam187b) from Mus musculus (Mouse).